The following is a 38-amino-acid chain: Defensin D7 (38 aa).

Belongs to the DEFL family. Group IV subfamily. As to expression, distributed in the epidermal cell layer of leaves and in the subepidermal layer region of stems. Not in roots.

The protein localises to the secreted. It localises to the cell wall. In terms of biological role, antimicrobial peptide. Active against Fusarium spp., Gram-positive and Gram-negative bacterial pathogens. In Spinacia oleracea (Spinach), this protein is Defensin D7.